The following is a 269-amino-acid chain: 4-hydroxy-tetrahydrodipicolinate reductase (269 aa).

NAD(+) is bound by residues 8–13 and glutamate 34; that span reads GAAGRM. Arginine 35 contacts NADP(+). NAD(+)-binding positions include 98-100 and 122-125; these read GTT and APNY. Histidine 155 functions as the Proton donor/acceptor in the catalytic mechanism. Histidine 156 contacts (S)-2,3,4,5-tetrahydrodipicolinate. Catalysis depends on lysine 159, which acts as the Proton donor. 165-166 is a (S)-2,3,4,5-tetrahydrodipicolinate binding site; sequence GT.

It belongs to the DapB family.

It is found in the cytoplasm. The enzyme catalyses (S)-2,3,4,5-tetrahydrodipicolinate + NAD(+) + H2O = (2S,4S)-4-hydroxy-2,3,4,5-tetrahydrodipicolinate + NADH + H(+). The catalysed reaction is (S)-2,3,4,5-tetrahydrodipicolinate + NADP(+) + H2O = (2S,4S)-4-hydroxy-2,3,4,5-tetrahydrodipicolinate + NADPH + H(+). Its pathway is amino-acid biosynthesis; L-lysine biosynthesis via DAP pathway; (S)-tetrahydrodipicolinate from L-aspartate: step 4/4. Its function is as follows. Catalyzes the conversion of 4-hydroxy-tetrahydrodipicolinate (HTPA) to tetrahydrodipicolinate. The chain is 4-hydroxy-tetrahydrodipicolinate reductase from Vibrio vulnificus (strain CMCP6).